A 997-amino-acid polypeptide reads, in one-letter code: MTISLSNIKKRDHSKISDGTSGESSLVKRKQLESATGDQEEEYTDHEIIIEPLHFANNNNTVLTDSENYLRWQNTISNVVKSVVSIHFSQVAPFDCDSALVSEATGFVVDAKLGIILTNRHVVGPGPFVGYVVFDNHEECDVIPIYRDPVHDFGFLKFDPKNIKYSKIKALTLKPSLAKVGSEIRVVGNDAGEKLSILAGFISRIDRNAPEYGELTYNDFNTEYIQAAASASGGSSGSPVVNIDGYAVALQAGGSTEASTDFFLPLDRILRALICIQTNKPITRGTIQVQWLLKPYDECRRLGLTSERESEARAKFPENIGLLVAETVLREGPGYDKIKEGDTLISINGETISSFMQVDKIQDENVGKEIQLVIQRGGVECTVTCTVGDLHAITPHRYVEVCGATFHELSYQMARFYALPVRGVFLSSASGSFNFDSKERVGWIVDSIDNKETPDLDTFIEIMKTIPDRKRVTVRYHHLTDQHSPLVTSIYIDRHWCNEFRVYTRNDTTGIWDYKNVADPLPADALKPRSAKIIPIPVNNEKVAKLSSSLCTVATMAAVPLDSLSADILKTSGLIIDAEKGYVLVSRRVVPHDCLDTFVTIADSLVVPATVEFLHPTHNFAIVKYDPELVKAPLITPKLSTTRMKRGDKLQFIGFTQNDRIVTSETTVTDISSVSIPSNLIPRYRATNLEAISIDCNVSTRCNSGILTDNDGTVRGLWLPFLGERLENKEKVYLMGLDIMDCREVIDILKNGGKPRVSIVDAGFGSISVLQARIRGVPEEWIMRMEHESNNRLQFITVSRVSYTEDKIHLETGDVILSVNGKLVTEMNDLNGVVSSADGILPSAMLDFKVVRDGNIVDLKIKTVEVQETDRFVIFAGSILQKPHHAVLQAMVDVPKGVYCTFRGESSPALQYGISATNFITHVNEIETPDLDTFLKVVKTIPDNSYCKMRLMTFDNVPFAISLKTNYHYFPTAELKRDNITHKWIEKEFTGNSQSEK.

Residues Met1–Tyr43 form a disordered region. Residues Val83–Leu273 form a serine protease region. Catalysis depends on charge relay system residues His121, Asp152, and Ser235. PDZ domains lie at Arg300–Gly378 and Glu779–Gly854.

The protein belongs to the peptidase S1C family. In terms of assembly, interacts with BIR1.

The protein localises to the nucleus. Nuclear serine protease which mediates apoptosis through proteolysis of the apoptotic inhibitor BIR1. The polypeptide is Pro-apoptotic serine protease NMA111 (NMA111) (Saccharomyces cerevisiae (strain YJM789) (Baker's yeast)).